The primary structure comprises 93 residues: Small ribosomal subunit protein uS19 (93 aa).

It belongs to the universal ribosomal protein uS19 family.

Functionally, protein S19 forms a complex with S13 that binds strongly to the 16S ribosomal RNA. This Ligilactobacillus salivarius (strain UCC118) (Lactobacillus salivarius) protein is Small ribosomal subunit protein uS19.